The following is a 333-amino-acid chain: Serine/threonine-protein phosphatase 4 catalytic subunit 1 (333 aa).

Residues 1 to 28 (MALACTDSANSTFSRVDSPTSGPSDQLT) are disordered. Positions 7–27 (DSANSTFSRVDSPTSGPSDQL) are enriched in polar residues. Mn(2+) contacts are provided by D79, H81, D107, and N139. The active-site Proton donor is the H140. The Mn(2+) site is built by H189 and H264. Residue L333 is modified to Leucine methyl ester.

This sequence belongs to the PPP phosphatase family. PP-4 (PP-X) subfamily. In terms of assembly, serine/threonine-protein phosphatase 4 (PP4) occurs in different assemblies of the catalytic and one or more regulatory subunits. The regulatory subunits are likely to be ppfr-1, ppfr-2, ppfr-4 and smk-1. Interacts with mei-1. Mn(2+) is required as a cofactor. Methylation at the C-terminal Leu-333 is critical for interactions with regulatory subunits.

It is found in the cytoplasm. It localises to the cytoskeleton. Its subcellular location is the microtubule organizing center. The protein localises to the centrosome. It catalyses the reaction O-phospho-L-seryl-[protein] + H2O = L-seryl-[protein] + phosphate. The enzyme catalyses O-phospho-L-threonyl-[protein] + H2O = L-threonyl-[protein] + phosphate. Protein phosphatase which plays an essential role in meiosis and in early embryonic mitosis. During spermatocyte meiosis and the first embryonic mitosis, regulates centrosome maturation, and thus spindle formation, by recruiting some of the components of the pericentriolar material (PCM). During oocyte meiosis I, regulates meiotic chromosome dynamics including synapsis-independent chromosome pairing, restriction of synapsis to homologous chromosomes, programmed DNA double-strand break initiation and crossover formation resulting in chiasma formation. During oocyte meiosis II and probably together with regulatory subunit ppfr-1, may regulate microtubule severing by dephosphorylating and activating mei-1, a component of the katanin microtubule severing complex. The polypeptide is Serine/threonine-protein phosphatase 4 catalytic subunit 1 (Caenorhabditis elegans).